We begin with the raw amino-acid sequence, 335 residues long: UPF0324 membrane protein LMOf2365_2179 (335 aa).

8 helical membrane-spanning segments follow: residues 10–28 (TFWY…SYFL), 33–55 (FLMI…ALFP), 91–113 (AGWR…VYFL), 123–142 (LAIL…VVAI), 155–177 (VAAT…IYPI), 251–270 (VPWF…FGII), 277–299 (FLVI…NVHL), and 309–331 (PFAA…VLLF).

The protein belongs to the UPF0324 family.

The protein resides in the cell membrane. This Listeria monocytogenes serotype 4b (strain F2365) protein is UPF0324 membrane protein LMOf2365_2179.